The chain runs to 596 residues: Meiosis-specific protein ASY1 (596 aa).

In terms of domain architecture, HORMA spans 15 to 228; sequence QDSLLLTRNL…SKHLVLTLKV (214 aa). The interval 235 to 303 is disordered; sequence CEDENDDMQD…NTQDPAENEQ (69 aa). Positions 282 to 295 are enriched in acidic residues; that stretch reads QDDDDGEVDEDDNT. Residues 351-449 form the SWIRM domain; the sequence is SKTGKDMYIK…ASSNRRLGKR (99 aa). Residues 562-596 are disordered; the sequence is TVNCSQASQDRRGRKTSMVREPILQYSKRQKSQAN.

Interacts with ASY3.

The protein resides in the chromosome. It is found in the nucleus. Its function is as follows. Required for normal meiosis in male and female gametophytes. Plays a crucial role in coordinating the activity of DMC1, a key member of the homologous recombination machinery. Acts at the interface between the developing chromosome axes and the recombination machinery to ensure DMC1-mediated interhomolog recombination. The protein is Meiosis-specific protein ASY1 of Arabidopsis thaliana (Mouse-ear cress).